Here is a 131-residue protein sequence, read N- to C-terminus: Small ribosomal subunit protein uS8 (131 aa).

The protein belongs to the universal ribosomal protein uS8 family. In terms of assembly, part of the 30S ribosomal subunit. Contacts proteins S5 and S12.

Functionally, one of the primary rRNA binding proteins, it binds directly to 16S rRNA central domain where it helps coordinate assembly of the platform of the 30S subunit. This chain is Small ribosomal subunit protein uS8, found in Prosthecochloris aestuarii (strain DSM 271 / SK 413).